Reading from the N-terminus, the 1045-residue chain is 3-hydroxy-3-methylglutaryl-coenzyme A reductase 2 (1045 aa).

Residues 1 to 24 (MSLPLKTIVHLVKPFACTARFSAR) lie on the Cytoplasmic side of the membrane. Residues 25–45 (YPIHVIVVAVLLSAAAYLSVT) form a helical membrane-spanning segment. At 46–186 (QSYLNEWKLD…FSNKTSEFDQ (141 aa)) the chain is on the lumenal side. Asparagine 115, asparagine 150, asparagine 158, and asparagine 179 each carry an N-linked (GlcNAc...) asparagine glycan. Residues 187-207 (FDLFIILAAYLTLFYTLCCLF) traverse the membrane as a helical segment. One can recognise an SSD domain in the interval 188 to 356 (DLFIILAAYL…ATFYSAILSM (169 aa)). Over 208–216 (NDMRKIGSK) the chain is Cytoplasmic. The helical transmembrane segment at 217-237 (FWLSFSALSNSACALYLSLYT) threads the bilayer. The Lumenal segment spans residues 238–243 (THSLLK). A helical membrane pass occupies residues 244-264 (KPASLLSLVIGLPFIVVIIGF). The Cytoplasmic segment spans residues 265-301 (KHKVRLAAFSLQKFHRISIDKKITVSNIIYEAMFQEG). Residues 302–322 (AYLIRDYLFYISSFIGCAIYA) traverse the membrane as a helical segment. The Lumenal portion of the chain corresponds to 323-324 (RH). A helical membrane pass occupies residues 325 to 345 (LPGLVNFCILSTFMLVFDLLL). Over 346–402 (SATFYSAILSMKLEINIIHRSTVIRQTLEEDGVVPTTADIIYKDETASEPHFLRSNV) the chain is Cytoplasmic. Residues 403-423 (AIILGKASVIGLLLLINLYVF) form a helical membrane-spanning segment. At 424 to 497 (TDKLNATILN…DSVSNAIRDQ (74 aa)) the chain is on the lumenal side. N-linked (GlcNAc...) asparagine glycans are attached at residues asparagine 428 and asparagine 455. Residues 498-518 (FISKLLFFAFAVSISINVYLL) form a helical membrane-spanning segment. Residues 519 to 1045 (NAAKIHTGYM…GPPCKTSALL (527 aa)) lie on the Cytoplasmic side of the membrane. Residue threonine 565 is modified to Phosphothreonine. Catalysis depends on glutamate 710, which acts as the Charge relay system. A CoA-binding site is contributed by 716–722 (SAMRGCK). NADP(+)-binding positions include 777 to 779 (SRF) and 804 to 812 (DAMGMNMIS). The active-site Charge relay system is lysine 844. 873 to 875 (VLK) is a binding site for CoA. Aspartate 920 acts as the Charge relay system in catalysis. A CoA-binding site is contributed by 1015–1016 (SH). Histidine 1016 acts as the Proton donor in catalysis. Positions 1018 to 1045 (THNRKTNKANELPQPSNKGPPCKTSALL) are disordered. Residue 1020 to 1021 (NR) participates in NADP(+) binding.

This sequence belongs to the HMG-CoA reductase family.

It localises to the endoplasmic reticulum membrane. The protein resides in the nucleus envelope. The enzyme catalyses (R)-mevalonate + 2 NADP(+) + CoA = (3S)-3-hydroxy-3-methylglutaryl-CoA + 2 NADPH + 2 H(+). It participates in metabolic intermediate biosynthesis; (R)-mevalonate biosynthesis; (R)-mevalonate from acetyl-CoA: step 3/3. In terms of biological role, HMG-CoA reductase; part of the first module of ergosterol biosynthesis pathway constitutes by the early steps of the pathway, conserved across all eukaryotes, and which results in the formation of mevalonate from acetyl-coenzyme A (acetyl-CoA). HMG1 and HMG2 catalyze the reduction of hydroxymethylglutaryl-CoA (HMG-CoA) to mevalonate that is the rate-limiting step within the first mosule. The first module starts with the action of the cytosolic acetyl-CoA acetyltransferase ERG10 that catalyzes the formation of acetoacetyl-CoA. The hydroxymethylglutaryl-CoA synthase ERG13 then condenses acetyl-CoA with acetoacetyl-CoA to form HMG-CoA. The rate-limiting step of the early module is the reduction to mevalonate by the 3-hydroxy-3-methylglutaryl-coenzyme A (HMG-CoA) reductases HMG1 and HMG2 which are derived from a single ancestral HMGR gene by gene duplication. The polypeptide is 3-hydroxy-3-methylglutaryl-coenzyme A reductase 2 (Saccharomyces cerevisiae (strain ATCC 204508 / S288c) (Baker's yeast)).